We begin with the raw amino-acid sequence, 181 residues long: Acireductone dioxygenase (181 aa).

His91, His93, Glu97, and His136 together coordinate Fe(2+). The Ni(2+) site is built by His91, His93, Glu97, and His136.

It belongs to the acireductone dioxygenase (ARD) family. As to quaternary structure, monomer. Interacts with MMP14. The cofactor is Fe(2+). Ni(2+) serves as cofactor.

The protein localises to the cytoplasm. It localises to the nucleus. It is found in the cell membrane. The catalysed reaction is 1,2-dihydroxy-5-(methylsulfanyl)pent-1-en-3-one + O2 = 4-methylsulfanyl-2-oxobutanoate + formate + 2 H(+). It catalyses the reaction 1,2-dihydroxy-5-(methylsulfanyl)pent-1-en-3-one + O2 = 3-(methylsulfanyl)propanoate + CO + formate + 2 H(+). It participates in amino-acid biosynthesis; L-methionine biosynthesis via salvage pathway; L-methionine from S-methyl-5-thio-alpha-D-ribose 1-phosphate: step 5/6. Functionally, catalyzes 2 different reactions between oxygen and the acireductone 1,2-dihydroxy-3-keto-5-methylthiopentene (DHK-MTPene) depending upon the metal bound in the active site. Fe-containing acireductone dioxygenase (Fe-ARD) produces formate and 2-keto-4-methylthiobutyrate (KMTB), the alpha-ketoacid precursor of methionine in the methionine recycle pathway. Ni-containing acireductone dioxygenase (Ni-ARD) produces methylthiopropionate, carbon monoxide and formate, and does not lie on the methionine recycle pathway. This chain is Acireductone dioxygenase (adi1), found in Danio rerio (Zebrafish).